The chain runs to 269 residues: 5'-nucleotidase SurE (269 aa).

A divalent metal cation is bound by residues Asp-11, Asp-12, Ser-43, and Asn-101.

The protein belongs to the SurE nucleotidase family. It depends on a divalent metal cation as a cofactor.

The protein resides in the cytoplasm. It carries out the reaction a ribonucleoside 5'-phosphate + H2O = a ribonucleoside + phosphate. In terms of biological role, nucleotidase that shows phosphatase activity on nucleoside 5'-monophosphates. This Synechococcus sp. (strain WH7803) protein is 5'-nucleotidase SurE.